The following is a 303-amino-acid chain: MSKEHTLSQNISRVNFKELQQIIKMGLVQGNLIPAFAGAWLAVVMTNHSFLSSIPQILLMLFGSTLIMGGACALNNYYDQDIDRIMPSKQNRPTVNNRITDQNLLLLSFGMMLVGEICLFLLNIPSGVLGLMGIVGYVSYYSIWSKRHTTWNTVIGSFPGAVPPLIGWVAIEGQISLTAIALFLVVFCWQPIHFYALAIKRKDEYALANIPMLPSVKGFKRTRVSMFIWLIILLPVPLLLINLGVVFVVLATLLNLGWIALGLTTFKKNSDQTKWATQMFIYSLNYLVIFFVLAVIVSLLTLI.

9 consecutive transmembrane segments (helical) span residues 25–45 (MGLV…AVVM), 54–74 (IPQI…ACAL), 104–124 (LLLL…LLNI), 125–145 (PSGV…SIWS), 151–171 (WNTV…WVAI), 179–199 (AIAL…ALAI), 227–247 (FIWL…GVVF), 248–268 (VVLA…TFKK), and 280–300 (FIYS…VSLL).

It belongs to the UbiA prenyltransferase family. Protoheme IX farnesyltransferase subfamily. In terms of assembly, interacts with CtaA.

Its subcellular location is the cell membrane. The catalysed reaction is heme b + (2E,6E)-farnesyl diphosphate + H2O = Fe(II)-heme o + diphosphate. It participates in porphyrin-containing compound metabolism; heme O biosynthesis; heme O from protoheme: step 1/1. Converts heme B (protoheme IX) to heme O by substitution of the vinyl group on carbon 2 of heme B porphyrin ring with a hydroxyethyl farnesyl side group. This chain is Protoheme IX farnesyltransferase, found in Staphylococcus aureus (strain Mu3 / ATCC 700698).